A 157-amino-acid chain; its full sequence is uncharacterized protein (157 aa).

A signal peptide spans 1–17 (MSMKTKAAFHLVLFGLA). C18 carries the N-palmitoyl cysteine lipid modification. C18 is lipidated: S-diacylglycerol cysteine. 3 consecutive transmembrane segments (helical) span residues 42–64 (MVFD…YLYL), 98–120 (ASYI…YPLF), and 124–146 (IPFF…YVIS).

It is found in the cell membrane. This is an uncharacterized protein from Bacillus subtilis (strain 168).